We begin with the raw amino-acid sequence, 24 residues long: FLPMLAGLAASMVPKFVCLITKKC.

Cys-18 and Cys-24 form a disulfide bridge.

In terms of tissue distribution, expressed by the skin glands.

It localises to the secreted. Functionally, antibacterial activity against Gram-positive bacterium S.aureus and Gram-negative bacterium E.coli. This Rana luteiventris (Columbia spotted frog) protein is Brevinin-1Lb.